A 259-amino-acid chain; its full sequence is 3-deoxy-manno-octulosonate cytidylyltransferase (259 aa).

This sequence belongs to the KdsB family.

The protein localises to the cytoplasm. The enzyme catalyses 3-deoxy-alpha-D-manno-oct-2-ulosonate + CTP = CMP-3-deoxy-beta-D-manno-octulosonate + diphosphate. The protein operates within nucleotide-sugar biosynthesis; CMP-3-deoxy-D-manno-octulosonate biosynthesis; CMP-3-deoxy-D-manno-octulosonate from 3-deoxy-D-manno-octulosonate and CTP: step 1/1. Its pathway is bacterial outer membrane biogenesis; lipopolysaccharide biosynthesis. In terms of biological role, activates KDO (a required 8-carbon sugar) for incorporation into bacterial lipopolysaccharide in Gram-negative bacteria. This chain is 3-deoxy-manno-octulosonate cytidylyltransferase, found in Aeromonas salmonicida (strain A449).